The primary structure comprises 1048 residues: Bifunctional heparan sulfate N-deacetylase/N-sulfotransferase (1048 aa).

Residues 1–172 are Cytoplasmic-facing; that stretch reads MTISGGNQHN…RRCFGINVRR (172 aa). A helical; Signal-anchor for type II membrane protein transmembrane segment spans residues 173 to 192; that stretch reads CVLALLAITMVSIFYYTHYV. A heparan sulfate N-deacetylase region spans residues 192-752; that stretch reads VDTGVFNGLI…VRHKKIWSKT (561 aa). The Lumenal portion of the chain corresponds to 193–1048; the sequence is DTGVFNGLIQ…WLKDDLSTGT (856 aa). N-linked (GlcNAc...) asparagine glycans are attached at residues Asn-388 and Asn-555. A heparan sulfate N-sulfotransferase region spans residues 753 to 1048; it reads KNCDSLPKFL…WLKDDLSTGT (296 aa). The active-site For sulfotransferase activity is the Lys-768. 768–772 contacts 3'-phosphoadenylyl sulfate; sequence KTGTT. N-linked (GlcNAc...) asparagine glycosylation is present at Asn-823. Position 877 (Ser-877) interacts with 3'-phosphoadenylyl sulfate. A glycan (N-linked (GlcNAc...) asparagine) is linked at Asn-892. Cys-983 and Cys-993 are disulfide-bonded. 3'-phosphoadenylyl sulfate is bound at residue 998 to 1002; sequence KGRQY.

This sequence belongs to the sulfotransferase 1 family. NDST subfamily. As to quaternary structure, monomer.

It is found in the golgi apparatus membrane. It catalyses the reaction alpha-D-glucosaminyl-[heparan sulfate](n) + 3'-phosphoadenylyl sulfate = N-sulfo-alpha-D-glucosaminyl-[heparan sulfate](n) + adenosine 3',5'-bisphosphate + 2 H(+). It functions in the pathway glycan metabolism; heparan sulfate biosynthesis. It participates in glycan metabolism; heparin biosynthesis. In terms of biological role, essential bifunctional enzyme that catalyzes both the N-deacetylation and the N-sulfation of glucosamine (GlcNAc) of the glycosaminoglycan in heparan sulfate. Modifies the GlcNAc-GlcA disaccharide repeating sugar backbone to make N-sulfated heparosan, a prerequisite substrate for later modifications in heparin biosynthesis. Plays a role in diffusion of morphogen wingless (wg) via its role in heparan sulfate proteoglycans (HSPGs) biosynthesis, HSPGs being required for movement of wg morphogens. Required for wg signaling during both embryonic and imaginal disk development. Also required for FGF receptor signaling. The protein is Bifunctional heparan sulfate N-deacetylase/N-sulfotransferase (sfl) of Drosophila melanogaster (Fruit fly).